The sequence spans 347 residues: Two pore potassium channel a (347 aa).

The span at 1-11 (MDDNSIQQSLL) shows a compositional bias: polar residues. Positions 1-49 (MDDNSIQQSLLADNPNVLQRKPSEGVNRFRRCRSTPSTDPLQGPPEKGS) are disordered. At 1–65 (MDDNSIQQSL…LFKEMRPSFR (65 aa)) the chain is on the cytoplasmic side. The helical transmembrane segment at 66-86 (LVGLLLFIYLLVGVLAFYAVM) threads the bilayer. Positions 99–118 (DALYFCVVTMTTVGYGDLVP) form an intramembrane region, pore-forming. Residues 125-145 (LLACAFVFMGMAVVALFVSKV) traverse the membrane as a helical segment. Residues 146 to 183 (ADYLVEKQEVLFFKALHTNLKGGETKMLRAIETNRIKY) are Cytoplasmic-facing. A helical transmembrane segment spans residues 184–204 (KFYTNALLLVLSIISGTVFLW). Residues 213-232 (DSFYCVCATITTLGYGDKSF) constitute an intramembrane region (pore-forming). Residues 239 to 259 (VFAVFWIITSTIIMAQFFMYL) traverse the membrane as a helical segment. Residues 260-347 (AEIYTERRQK…YDLTLAQSAQ (88 aa)) lie on the Cytoplasmic side of the membrane. EF-hand domains lie at 276-311 (LTRKMTKMDLEAADLDDDRQVGAAEFVVYKLKELGK) and 315-347 (EEISSFLEEFEKLDVDHSGTLSPYDLTLAQSAQ). 10 residues coordinate Ca(2+): aspartate 289, aspartate 291, aspartate 293, glutamine 295, glutamate 300, aspartate 328, aspartate 330, serine 332, threonine 334, and aspartate 339.

This sequence belongs to the two pore domain potassium channel (TC 1.A.1.7) family. In terms of assembly, homodimer.

It localises to the vacuole membrane. Highly selective inward-rectifying potassium channel that is specifically located in the tonoplast of large vacuoles. Functions independently of the voltage difference across the membrane. This chain is Two pore potassium channel a (TPKA), found in Oryza sativa subsp. japonica (Rice).